The following is a 736-amino-acid chain: Phosphoribosylformylglycinamidine synthase subunit PurL (736 aa).

The active site involves His-49. 2 residues coordinate ATP: Tyr-52 and Lys-91. Glu-93 contacts Mg(2+). Substrate-binding positions include 94–97 (SHNH) and Arg-116. Catalysis depends on His-95, which acts as the Proton acceptor. Asp-117 serves as a coordination point for Mg(2+). Gln-240 contacts substrate. Residue Asp-268 participates in Mg(2+) binding. 312 to 314 (ESQ) provides a ligand contact to substrate. Residues Asp-493 and Gly-530 each contribute to the ATP site. Asn-531 contributes to the Mg(2+) binding site. Ser-533 lines the substrate pocket.

Belongs to the FGAMS family. As to quaternary structure, monomer. Part of the FGAM synthase complex composed of 1 PurL, 1 PurQ and 2 PurS subunits.

It localises to the cytoplasm. The enzyme catalyses N(2)-formyl-N(1)-(5-phospho-beta-D-ribosyl)glycinamide + L-glutamine + ATP + H2O = 2-formamido-N(1)-(5-O-phospho-beta-D-ribosyl)acetamidine + L-glutamate + ADP + phosphate + H(+). Its pathway is purine metabolism; IMP biosynthesis via de novo pathway; 5-amino-1-(5-phospho-D-ribosyl)imidazole from N(2)-formyl-N(1)-(5-phospho-D-ribosyl)glycinamide: step 1/2. Part of the phosphoribosylformylglycinamidine synthase complex involved in the purines biosynthetic pathway. Catalyzes the ATP-dependent conversion of formylglycinamide ribonucleotide (FGAR) and glutamine to yield formylglycinamidine ribonucleotide (FGAM) and glutamate. The FGAM synthase complex is composed of three subunits. PurQ produces an ammonia molecule by converting glutamine to glutamate. PurL transfers the ammonia molecule to FGAR to form FGAM in an ATP-dependent manner. PurS interacts with PurQ and PurL and is thought to assist in the transfer of the ammonia molecule from PurQ to PurL. This chain is Phosphoribosylformylglycinamidine synthase subunit PurL, found in Rhodopseudomonas palustris (strain TIE-1).